The sequence spans 293 residues: 4-hydroxy-tetrahydrodipicolinate synthase (293 aa).

Residue threonine 45 coordinates pyruvate. The active-site Proton donor/acceptor is the tyrosine 133. Lysine 161 (schiff-base intermediate with substrate) is an active-site residue. Isoleucine 204 contacts pyruvate.

This sequence belongs to the DapA family. Homotetramer; dimer of dimers.

It localises to the cytoplasm. It carries out the reaction L-aspartate 4-semialdehyde + pyruvate = (2S,4S)-4-hydroxy-2,3,4,5-tetrahydrodipicolinate + H2O + H(+). It participates in amino-acid biosynthesis; L-lysine biosynthesis via DAP pathway; (S)-tetrahydrodipicolinate from L-aspartate: step 3/4. Functionally, catalyzes the condensation of (S)-aspartate-beta-semialdehyde [(S)-ASA] and pyruvate to 4-hydroxy-tetrahydrodipicolinate (HTPA). The polypeptide is 4-hydroxy-tetrahydrodipicolinate synthase (Yersinia pseudotuberculosis serotype O:1b (strain IP 31758)).